A 186-amino-acid chain; its full sequence is Elongation factor P (186 aa).

Belongs to the elongation factor P family.

It is found in the cytoplasm. It functions in the pathway protein biosynthesis; polypeptide chain elongation. Involved in peptide bond synthesis. Stimulates efficient translation and peptide-bond synthesis on native or reconstituted 70S ribosomes in vitro. Probably functions indirectly by altering the affinity of the ribosome for aminoacyl-tRNA, thus increasing their reactivity as acceptors for peptidyl transferase. The polypeptide is Elongation factor P (Shewanella woodyi (strain ATCC 51908 / MS32)).